The sequence spans 921 residues: Isoleucine--tRNA ligase (921 aa).

Residues 57–67 carry the 'HIGH' region motif; that stretch reads PYANGELHMGH. Residue E552 participates in L-isoleucyl-5'-AMP binding. The short motif at 593–597 is the 'KMSKS' region element; that stretch reads KMSKS. An ATP-binding site is contributed by K596. Residues C888, C891, C908, and C911 each coordinate Zn(2+).

Belongs to the class-I aminoacyl-tRNA synthetase family. IleS type 1 subfamily. In terms of assembly, monomer. The cofactor is Zn(2+).

It is found in the cytoplasm. The catalysed reaction is tRNA(Ile) + L-isoleucine + ATP = L-isoleucyl-tRNA(Ile) + AMP + diphosphate. Its function is as follows. Catalyzes the attachment of isoleucine to tRNA(Ile). As IleRS can inadvertently accommodate and process structurally similar amino acids such as valine, to avoid such errors it has two additional distinct tRNA(Ile)-dependent editing activities. One activity is designated as 'pretransfer' editing and involves the hydrolysis of activated Val-AMP. The other activity is designated 'posttransfer' editing and involves deacylation of mischarged Val-tRNA(Ile). This Listeria monocytogenes serotype 4b (strain F2365) protein is Isoleucine--tRNA ligase.